A 431-amino-acid polypeptide reads, in one-letter code: Probable indole-3-pyruvate monooxygenase YUCCA7 (431 aa).

FAD is bound at residue 36–41; it reads GAGPSG. Position 207–212 (207–212) interacts with NADP(+); the sequence is GCGNSG.

Belongs to the FMO family. Requires FAD as cofactor. As to expression, expressed in shoot apex regions and siliques, and at high levels in roots. Detected in flowers, stems and leaves.

It carries out the reaction indole-3-pyruvate + NADPH + O2 + H(+) = (indol-3-yl)acetate + CO2 + NADP(+) + H2O. Its pathway is plant hormone metabolism; auxin biosynthesis. Functionally, involved in auxin biosynthesis. Belongs to the set of redundant YUCCA genes probably responsible for auxin biosynthesis in roots. This Arabidopsis thaliana (Mouse-ear cress) protein is Probable indole-3-pyruvate monooxygenase YUCCA7 (YUC7).